We begin with the raw amino-acid sequence, 205 residues long: LexA repressor (205 aa).

Positions 28 to 48 (RAELMRAFDFRSPNAAESHLR) form a DNA-binding region, H-T-H motif. Catalysis depends on for autocatalytic cleavage activity residues Ser-120 and Lys-159.

The protein belongs to the peptidase S24 family. As to quaternary structure, homodimer.

The catalysed reaction is Hydrolysis of Ala-|-Gly bond in repressor LexA.. Represses a number of genes involved in the response to DNA damage (SOS response), including recA and lexA. In the presence of single-stranded DNA, RecA interacts with LexA causing an autocatalytic cleavage which disrupts the DNA-binding part of LexA, leading to derepression of the SOS regulon and eventually DNA repair. The sequence is that of LexA repressor from Acidithiobacillus ferrooxidans (strain ATCC 23270 / DSM 14882 / CIP 104768 / NCIMB 8455) (Ferrobacillus ferrooxidans (strain ATCC 23270)).